A 273-amino-acid polypeptide reads, in one-letter code: Putative phosphoenolpyruvate synthase regulatory protein (273 aa).

An ADP-binding site is contributed by Ala153–Thr160.

The protein belongs to the pyruvate, phosphate/water dikinase regulatory protein family. PSRP subfamily.

It carries out the reaction [pyruvate, water dikinase] + ADP = [pyruvate, water dikinase]-phosphate + AMP + H(+). The catalysed reaction is [pyruvate, water dikinase]-phosphate + phosphate + H(+) = [pyruvate, water dikinase] + diphosphate. Functionally, bifunctional serine/threonine kinase and phosphorylase involved in the regulation of the phosphoenolpyruvate synthase (PEPS) by catalyzing its phosphorylation/dephosphorylation. The polypeptide is Putative phosphoenolpyruvate synthase regulatory protein (Xanthomonas campestris pv. campestris (strain 8004)).